A 149-amino-acid polypeptide reads, in one-letter code: SsrA-binding protein (149 aa).

This sequence belongs to the SmpB family.

It is found in the cytoplasm. In terms of biological role, required for rescue of stalled ribosomes mediated by trans-translation. Binds to transfer-messenger RNA (tmRNA), required for stable association of tmRNA with ribosomes. tmRNA and SmpB together mimic tRNA shape, replacing the anticodon stem-loop with SmpB. tmRNA is encoded by the ssrA gene; the 2 termini fold to resemble tRNA(Ala) and it encodes a 'tag peptide', a short internal open reading frame. During trans-translation Ala-aminoacylated tmRNA acts like a tRNA, entering the A-site of stalled ribosomes, displacing the stalled mRNA. The ribosome then switches to translate the ORF on the tmRNA; the nascent peptide is terminated with the 'tag peptide' encoded by the tmRNA and targeted for degradation. The ribosome is freed to recommence translation, which seems to be the essential function of trans-translation. The chain is SsrA-binding protein from Anaplasma marginale (strain Florida).